We begin with the raw amino-acid sequence, 104 residues long: UPF0134 protein MPN_104 (104 aa).

Belongs to the UPF0134 family.

In Mycoplasma pneumoniae (strain ATCC 29342 / M129 / Subtype 1) (Mycoplasmoides pneumoniae), this protein is UPF0134 protein MPN_104.